Here is a 222-residue protein sequence, read N- to C-terminus: Tetratricopeptide repeat protein 9A (222 aa).

Disordered regions lie at residues 1 to 49 (MERK…AAAE) and 88 to 116 (KGLL…GRLS). The stretch at 56–89 (RAHEFKSQGAQCYKDKKFREAIGKYHRALLELKG) is one TPR 1 repeat. A Phosphoserine modification is found at Ser105. TPR repeat units lie at residues 125–160 (AIEI…LKKE) and 161–194 (GENF…RTQQ).

It belongs to the TTC9 family.

The protein is Tetratricopeptide repeat protein 9A (TTC9) of Homo sapiens (Human).